Here is an 83-residue protein sequence, read N- to C-terminus: MKPWIIVLTVSAHGILVFLHVLGSLKDDLEEIDQCWVQPPTRFCGKRCTKVRKCVSPNYTCCWTYCGNICLNNEEPFETLMKV.

Positions 1–24 (MKPWIIVLTVSAHGILVFLHVLGS) are cleaved as a signal peptide.

Its subcellular location is the secreted. The polypeptide is Protein WFDC9 (Wfdc9) (Mus musculus (Mouse)).